The primary structure comprises 490 residues: GDP-fucose protein O-fucosyltransferase 2 (490 aa).

Residues Met1–Ala25 form the signal peptide. Residues Asn29 and Asn79 are each glycosylated (N-linked (GlcNAc...) asparagine). A GDP-beta-L-fucose-binding site is contributed by Ser81–Asn85. Residue Glu82 is the Proton acceptor of the active site. Cysteines 203 and 226 form a disulfide. Position 336–338 (His336–Arg338) interacts with GDP-beta-L-fucose. N-linked (GlcNAc...) asparagine glycosylation occurs at Asn368. GDP-beta-L-fucose is bound by residues Asp418 and Thr435–Phe436. A disulfide bridge links Cys459 with Cys466.

The protein belongs to the glycosyltransferase 68 family.

It localises to the endoplasmic reticulum. The protein localises to the golgi apparatus. The catalysed reaction is L-seryl-[protein] + GDP-beta-L-fucose = 3-O-(alpha-L-fucosyl)-L-seryl-[protein] + GDP + H(+). It carries out the reaction L-threonyl-[protein] + GDP-beta-L-fucose = 3-O-(alpha-L-fucosyl)-L-threonyl-[protein] + GDP + H(+). It functions in the pathway protein modification; protein glycosylation. With respect to regulation, does not require divalent metal ions for optimal activity. In terms of biological role, catalyzes the reaction that attaches fucose through an O-glycosidic linkage to a conserved serine or threonine residue in the consensus sequence C1-X-X-S/T-C2 of thrombospondin type I repeats (TSRs) where C1 and C2 are the first and second cysteines of the repeat, respectively. O-fucosylates members of several protein families including the ADAMTS, the thrombospondin (TSP) and spondin families. The protein is GDP-fucose protein O-fucosyltransferase 2 of Drosophila melanogaster (Fruit fly).